The sequence spans 398 residues: Type II secretion system protein L (398 aa).

Residues 1 to 248 (MNNHHTSSAA…RQPTPRRWRP (248 aa)) are Cytoplasmic-facing. Residues 249–265 (VIVAALALLLLWSSNCL) form a helical membrane-spanning segment. Topologically, residues 266 to 398 (HDHLMLGQQA…GRLTLEGNDA (133 aa)) are periplasmic.

Belongs to the GSP L family. In terms of assembly, type II secretion system is composed of four main components: the outer membrane complex, the inner membrane complex, the cytoplasmic secretion ATPase and the periplasm-spanning pseudopilus. Forms homodimers. Interacts with PulM/GspM. Interacts with PulE/GspE and PulF/GspF.

Its subcellular location is the cell inner membrane. Inner membrane component of the type II secretion system required for the energy-dependent secretion of extracellular factors such as proteases and toxins from the periplasm. Plays a role in the complex assembly and recruits PulM resulting in a stable complex in the inner membrane. Provides thus a link between the energy-providing PulE protein in the cytoplasm and the rest of the T2SS machinery. This is Type II secretion system protein L (pulL) from Klebsiella pneumoniae.